A 238-amino-acid polypeptide reads, in one-letter code: Ribosomal RNA small subunit methyltransferase G (238 aa).

S-adenosyl-L-methionine-binding positions include Gly-77, Phe-82, Ala-128–Glu-129, and Arg-147. The disordered stretch occupies residues Arg-216–Ser-238.

The protein belongs to the methyltransferase superfamily. RNA methyltransferase RsmG family.

It localises to the cytoplasm. Functionally, specifically methylates the N7 position of guanine in position 535 of 16S rRNA. This chain is Ribosomal RNA small subunit methyltransferase G, found in Halalkalibacterium halodurans (strain ATCC BAA-125 / DSM 18197 / FERM 7344 / JCM 9153 / C-125) (Bacillus halodurans).